A 239-amino-acid chain; its full sequence is Ribosomal RNA large subunit methyltransferase E (239 aa).

Residues 1–20 (MTKAPIAGNRTGRKLGQRVK) are disordered. Residues 11–20 (TGRKLGQRVK) show a composition bias toward basic residues. Glycine 81, tryptophan 83, aspartate 104, aspartate 120, and aspartate 144 together coordinate S-adenosyl-L-methionine. Lysine 184 functions as the Proton acceptor in the catalytic mechanism.

The protein belongs to the class I-like SAM-binding methyltransferase superfamily. RNA methyltransferase RlmE family.

It is found in the cytoplasm. It carries out the reaction uridine(2552) in 23S rRNA + S-adenosyl-L-methionine = 2'-O-methyluridine(2552) in 23S rRNA + S-adenosyl-L-homocysteine + H(+). In terms of biological role, specifically methylates the uridine in position 2552 of 23S rRNA at the 2'-O position of the ribose in the fully assembled 50S ribosomal subunit. In Rhizobium leguminosarum bv. trifolii (strain WSM2304), this protein is Ribosomal RNA large subunit methyltransferase E.